The primary structure comprises 259 residues: UPF0246 protein PputGB1_4560 (259 aa).

This sequence belongs to the UPF0246 family.

The chain is UPF0246 protein PputGB1_4560 from Pseudomonas putida (strain GB-1).